We begin with the raw amino-acid sequence, 93 residues long: Cell division topological specificity factor (93 aa).

It belongs to the MinE family.

Its function is as follows. Prevents the cell division inhibition by proteins MinC and MinD at internal division sites while permitting inhibition at polar sites. This ensures cell division at the proper site by restricting the formation of a division septum at the midpoint of the long axis of the cell. This chain is Cell division topological specificity factor, found in Syntrophus aciditrophicus (strain SB).